The following is a 188-amino-acid chain: Elongation factor P (188 aa).

It belongs to the elongation factor P family.

It localises to the cytoplasm. It participates in protein biosynthesis; polypeptide chain elongation. In terms of biological role, involved in peptide bond synthesis. Stimulates efficient translation and peptide-bond synthesis on native or reconstituted 70S ribosomes in vitro. Probably functions indirectly by altering the affinity of the ribosome for aminoacyl-tRNA, thus increasing their reactivity as acceptors for peptidyl transferase. In Paramagnetospirillum magneticum (strain ATCC 700264 / AMB-1) (Magnetospirillum magneticum), this protein is Elongation factor P.